The chain runs to 279 residues: Probable thymidylate synthase (279 aa).

Residues Arg-21 and 136–137 (RR) each bind dUMP. Catalysis depends on Cys-156, which acts as the Nucleophile. Residues 177 to 180 (RSVD), Asn-188, and 218 to 220 (HIY) each bind dUMP. Asp-180 contacts (6R)-5,10-methylene-5,6,7,8-tetrahydrofolate.

This sequence belongs to the thymidylate synthase family.

The enzyme catalyses dUMP + (6R)-5,10-methylene-5,6,7,8-tetrahydrofolate = 7,8-dihydrofolate + dTMP. In terms of biological role, sythesizes the thymine necessary for the viral DNA replication. The chain is Probable thymidylate synthase from Escherichia coli (Enterobacteria phage T5).